The chain runs to 849 residues: Villin-1 (849 aa).

5 Gelsolin-like repeats span residues isoleucine 30 to leucine 107, arginine 147 to lysine 213, valine 262 to phenylalanine 335, glutamine 405 to phenylalanine 475, and alanine 527 to leucine 566. The interval glutamate 739–leucine 849 is disordered. 2 stretches are compositionally biased toward low complexity: residues lysine 747–threonine 782 and proline 791–serine 823.

Belongs to the villin/gelsolin family.

The protein resides in the cytoplasm. It is found in the cytoskeleton. Ca(2+)-independent actin-binding protein. Binds actin microfilaments (MFs). Involved in actin filament bundling, severing and capping. Caps the barbed end of actin filaments and protects them from disassembly. Promotes VLN3-mediated MF severing. The protein is Villin-1 of Oryza sativa subsp. indica (Rice).